Here is a 177-residue protein sequence, read N- to C-terminus: Large ribosomal subunit protein uL6 (177 aa).

Over residues 152-171 the composition is skewed to basic and acidic residues; it reads RPPEPYKGKGVRYDDEEVRR. The interval 152-177 is disordered; the sequence is RPPEPYKGKGVRYDDEEVRRKEAKKK.

Belongs to the universal ribosomal protein uL6 family. As to quaternary structure, part of the 50S ribosomal subunit.

Its function is as follows. This protein binds to the 23S rRNA, and is important in its secondary structure. It is located near the subunit interface in the base of the L7/L12 stalk, and near the tRNA binding site of the peptidyltransferase center. The sequence is that of Large ribosomal subunit protein uL6 from Shewanella sp. (strain ANA-3).